The primary structure comprises 167 residues: tRNA-specific adenosine deaminase (167 aa).

Residues 6-117 (FSHEYWMRHA…DAKTGAAGSL (112 aa)) form the CMP/dCMP-type deaminase domain. Position 57 (H57) interacts with Zn(2+). E59 serves as the catalytic Proton donor. C87 and C90 together coordinate Zn(2+).

Belongs to the cytidine and deoxycytidylate deaminase family. Homodimer. Requires Zn(2+) as cofactor.

The enzyme catalyses adenosine(34) in tRNA + H2O + H(+) = inosine(34) in tRNA + NH4(+). Its function is as follows. Catalyzes the deamination of adenosine to inosine at the wobble position 34 of tRNA(Arg2). The sequence is that of tRNA-specific adenosine deaminase from Escherichia coli O157:H7.